The chain runs to 522 residues: Alanine aminotransferase 2 (522 aa).

Lys-340 is modified (N6-(pyridoxal phosphate)lysine). 3 positions are modified to N6-acetyllysine: Lys-414, Lys-504, and Lys-511.

It belongs to the class-I pyridoxal-phosphate-dependent aminotransferase family. Alanine aminotransferase subfamily. As to quaternary structure, homodimer. It depends on pyridoxal 5'-phosphate as a cofactor. In terms of tissue distribution, specifically induced in fatty liver. Highly expressed in muscle, liver and white adipose tissue. Moderately expressed in brain and kidney and expressed at low levels in the heart.

It carries out the reaction L-alanine + 2-oxoglutarate = pyruvate + L-glutamate. It functions in the pathway amino-acid degradation; L-alanine degradation via transaminase pathway; pyruvate from L-alanine: step 1/1. Functionally, catalyzes the reversible transamination between alanine and 2-oxoglutarate to form pyruvate and glutamate. The sequence is that of Alanine aminotransferase 2 (Gpt2) from Mus musculus (Mouse).